A 440-amino-acid chain; its full sequence is Exosome complex component RRP45 (440 aa).

Position 65 is a phosphoserine (Ser65). Lys297 is subject to N6-acetyllysine; alternate. Lys297 is covalently cross-linked (Glycyl lysine isopeptide (Lys-Gly) (interchain with G-Cter in SUMO1); alternate). Lys297 is covalently cross-linked (Glycyl lysine isopeptide (Lys-Gly) (interchain with G-Cter in SUMO2); alternate). Phosphoserine occurs at positions 306 and 346. Positions 341–362 are disordered; that stretch reads EGIENSWGHLEDSEKEDEDEGG. Residues 353-362 show a composition bias toward acidic residues; sequence SEKEDEDEGG. Ser393 and Ser395 each carry phosphoserine. The interval 404 to 440 is disordered; sequence EPDKNPKKIRTQTISATQVKAPSKKPVKKRKKKRAAN. Residues 425-440 are compositionally biased toward basic residues; that stretch reads PSKKPVKKRKKKRAAN.

It belongs to the RNase PH family. Component of the RNA exosome core complex (Exo-9), composed of EXOSC1, EXOSC2, EXOSC3, EXOSC4, EXOSC5, EXOSC6, EXOSC7, EXOSC8 and EXOSC9; within the complex interacts with EXOSC3, EXOSC4, EXOSC5 and DIS3. The catalytically inactive RNA exosome core complex (Exo-9) associates with the catalytic subunit EXOSC10/RRP6. Exo-9 may associate with DIS3 to form the nucleolar exosome complex, or DIS3L to form the cytoplasmic exosome complex. Exo-9 is formed by a hexameric base ring consisting of the heterodimers EXOSC4-EXOSC9, EXOSC5-EXOSC8 and EXOSC6-EXOSC7, and a cap ring consisting of EXOSC1, EXOSC2 and EXOSC3. The RNA exosome complex associates with cofactors C1D/RRP47, MPHOSPH6/MPP6 and MTREX/MTR4. Interacts (via C-terminus region) with SETX (via N-terminus domain); the interaction enhances SETX sumoylation. Interacts with DIS3; the interaction is direct.

Its subcellular location is the cytoplasm. The protein resides in the nucleus. It is found in the nucleolus. It localises to the nucleoplasm. Non-catalytic component of the RNA exosome complex which has 3'-&gt;5' exoribonuclease activity and participates in a multitude of cellular RNA processing and degradation events. In the nucleus, the RNA exosome complex is involved in proper maturation of stable RNA species such as rRNA, snRNA and snoRNA, in the elimination of RNA processing by-products and non-coding 'pervasive' transcripts, such as antisense RNA species and promoter-upstream transcripts (PROMPTs), and of mRNAs with processing defects, thereby limiting or excluding their export to the cytoplasm. The RNA exosome may be involved in Ig class switch recombination (CSR) and/or Ig variable region somatic hypermutation (SHM) by targeting AICDA deamination activity to transcribed dsDNA substrates. In the cytoplasm, the RNA exosome complex is involved in general mRNA turnover and specifically degrades inherently unstable mRNAs containing AU-rich elements (AREs) within their 3' untranslated regions, and in RNA surveillance pathways, preventing translation of aberrant mRNAs. It seems to be involved in degradation of histone mRNA. The catalytic inactive RNA exosome core complex of 9 subunits (Exo-9) is proposed to play a pivotal role in the binding and presentation of RNA for ribonucleolysis, and to serve as a scaffold for the association with catalytic subunits and accessory proteins or complexes. EXOSC9 binds to ARE-containing RNAs. The chain is Exosome complex component RRP45 (EXOSC9) from Bos taurus (Bovine).